Here is a 320-residue protein sequence, read N- to C-terminus: Ferrochelatase (320 aa).

Histidine 194 and glutamate 275 together coordinate Fe cation.

This sequence belongs to the ferrochelatase family. In terms of assembly, monomer.

The protein resides in the cytoplasm. The catalysed reaction is heme b + 2 H(+) = protoporphyrin IX + Fe(2+). Its pathway is porphyrin-containing compound metabolism; protoheme biosynthesis; protoheme from protoporphyrin-IX: step 1/1. Functionally, catalyzes the ferrous insertion into protoporphyrin IX. This is Ferrochelatase from Escherichia coli O9:H4 (strain HS).